The following is a 428-amino-acid chain: C4-dicarboxylate transport protein (428 aa).

9 consecutive transmembrane segments (helical) span residues 8 to 28 (SLYFQVLTAIAIGILLGHFYP), 44 to 64 (LIKMIIAPVIFCTVVTGIAGM), 76 to 96 (VALLYFEIVSTIALIIGLVIV), 142 to 162 (IGAFASGNILQVLLFAVLFGF), 184 to 204 (VIFGIINMIMRLAPIGAFGAM), 222 to 242 (LIVCFYITCILFVVVVLGSIA), 289 to 309 (VVGLVIPTGYSFNLDGTSIYL), 326 to 346 (IFHQITLLVVLLLSSKGAAGV), and 352 to 372 (IVLAATISAVGHLPVAGLALI).

Belongs to the dicarboxylate/amino acid:cation symporter (DAACS) (TC 2.A.23) family.

Its subcellular location is the cell inner membrane. Responsible for the transport of dicarboxylates such as succinate, fumarate, and malate from the periplasm across the membrane. This is C4-dicarboxylate transport protein from Cronobacter sakazakii (strain ATCC BAA-894) (Enterobacter sakazakii).